A 234-amino-acid chain; its full sequence is Sugar fermentation stimulation protein homolog (234 aa).

Belongs to the SfsA family.

The sequence is that of Sugar fermentation stimulation protein homolog from Shewanella putrefaciens (strain CN-32 / ATCC BAA-453).